We begin with the raw amino-acid sequence, 213 residues long: Glycerol-3-phosphate acyltransferase (213 aa).

A run of 6 helical transmembrane segments spans residues 2-22 (ITIVLLILAYLLGSIPSGLWI), 54-74 (MATFVIDFFKGTLATLLPIMF), 80-100 (SPLIFGLLAVIGHTFPIFAGF), 110-130 (AGVVFGFAPVFCLYLAVVFFG), 143-163 (VTASIAAVIGVLLFPLFGFIL), and 165-185 (NYDPLFIAIILALASLIIIRH).

The protein belongs to the PlsY family. As to quaternary structure, probably interacts with PlsX.

The protein localises to the cell membrane. The catalysed reaction is an acyl phosphate + sn-glycerol 3-phosphate = a 1-acyl-sn-glycero-3-phosphate + phosphate. It participates in lipid metabolism; phospholipid metabolism. Its function is as follows. Catalyzes the transfer of an acyl group from acyl-phosphate (acyl-PO(4)) to glycerol-3-phosphate (G3P) to form lysophosphatidic acid (LPA). This enzyme utilizes acyl-phosphate as fatty acyl donor, but not acyl-CoA or acyl-ACP. The polypeptide is Glycerol-3-phosphate acyltransferase (Streptococcus pneumoniae (strain Taiwan19F-14)).